The chain runs to 515 residues: RNA exonuclease NGL2 (515 aa).

Disordered regions lie at residues 1–54 and 353–381; these read MTQD…SKPI and RDGE…PVPE. Positions 21 to 34 are enriched in basic and acidic residues; sequence EINKSVKDAKHQTN. Residues 40-52 show a composition bias toward basic residues; that stretch reads QHKKKGKKGKKSK. The span at 369 to 381 shows a compositional bias: basic and acidic residues; it reads KYGKDQPESPVPE.

It belongs to the CCR4/nocturin family.

It localises to the cytoplasm. It is found in the nucleus. Its function is as follows. Involved in pre-rRNA processing. Required for the final stage of 3'-end maturation of 5.8S rRNA at site E. The polypeptide is RNA exonuclease NGL2 (NGL2) (Saccharomyces cerevisiae (strain ATCC 204508 / S288c) (Baker's yeast)).